The sequence spans 200 residues: GTP cyclohydrolase-2 (200 aa).

Position 50–54 (50–54 (RVHSE)) interacts with GTP. Cys55, Cys66, and Cys68 together coordinate Zn(2+). Residues Gln71, 93–95 (EGR), and Thr115 contribute to the GTP site. Residue Asp127 is the Proton acceptor of the active site. Arg129 acts as the Nucleophile in catalysis. Residues Thr150 and Lys155 each contribute to the GTP site.

Belongs to the GTP cyclohydrolase II family. Zn(2+) is required as a cofactor.

The catalysed reaction is GTP + 4 H2O = 2,5-diamino-6-hydroxy-4-(5-phosphoribosylamino)-pyrimidine + formate + 2 phosphate + 3 H(+). It participates in cofactor biosynthesis; riboflavin biosynthesis; 5-amino-6-(D-ribitylamino)uracil from GTP: step 1/4. Functionally, catalyzes the conversion of GTP to 2,5-diamino-6-ribosylamino-4(3H)-pyrimidinone 5'-phosphate (DARP), formate and pyrophosphate. In Acinetobacter baumannii (strain AB307-0294), this protein is GTP cyclohydrolase-2.